The primary structure comprises 90 residues: UPF0335 protein bsl7135 (90 aa).

The protein belongs to the UPF0335 family.

This chain is UPF0335 protein bsl7135, found in Bradyrhizobium diazoefficiens (strain JCM 10833 / BCRC 13528 / IAM 13628 / NBRC 14792 / USDA 110).